The primary structure comprises 547 residues: Chaperonin GroEL (547 aa).

ATP is bound by residues 30-33, lysine 51, 87-91, glycine 415, 479-481, and aspartate 495; these read TLGP, DGTTT, and NAA. Residues 525–547 form a disordered region; the sequence is PKEDSPGAGAGMGGMGGMGGMDM. Residues 532 to 547 are compositionally biased toward gly residues; sequence AGAGMGGMGGMGGMDM.

The protein belongs to the chaperonin (HSP60) family. Forms a cylinder of 14 subunits composed of two heptameric rings stacked back-to-back. Interacts with the co-chaperonin GroES.

The protein localises to the cytoplasm. It catalyses the reaction ATP + H2O + a folded polypeptide = ADP + phosphate + an unfolded polypeptide.. In terms of biological role, together with its co-chaperonin GroES, plays an essential role in assisting protein folding. The GroEL-GroES system forms a nano-cage that allows encapsulation of the non-native substrate proteins and provides a physical environment optimized to promote and accelerate protein folding. This chain is Chaperonin GroEL, found in Nitrosomonas eutropha (strain DSM 101675 / C91 / Nm57).